The chain runs to 191 residues: Putative manganese efflux pump MntP (191 aa).

The next 6 membrane-spanning stretches (helical) occupy residues 3 to 23, 37 to 57, 65 to 85, 107 to 129, 144 to 164, and 169 to 189; these read PISI…AAIG, LRAG…GWLL, VEAF…IHMI, WKLA…GLAF, CTLT…SMVG, and IIGG…HLHG.

Belongs to the MntP (TC 9.B.29) family.

Its subcellular location is the cell inner membrane. Functionally, probably functions as a manganese efflux pump. In Stenotrophomonas maltophilia (strain K279a), this protein is Putative manganese efflux pump MntP.